The sequence spans 270 residues: Probable feruloyl esterase C (270 aa).

The signal sequence occupies residues 1–21 (MIKSIILQAIMVLSTLTSVHG). N-linked (GlcNAc...) asparagine glycosylation is present at asparagine 23.

The protein belongs to the faeC family.

Its subcellular location is the secreted. It catalyses the reaction feruloyl-polysaccharide + H2O = ferulate + polysaccharide.. Its function is as follows. Involved in degradation of plant cell walls. Hydrolyzes the feruloyl-arabinose ester bond in arabinoxylans, and the feruloyl-galactose ester bond in pectin. Active against paranitrophenyl-acetate, methyl ferulate and wheat arabinoxylan. This is Probable feruloyl esterase C (faeC) from Aspergillus oryzae (strain ATCC 42149 / RIB 40) (Yellow koji mold).